We begin with the raw amino-acid sequence, 407 residues long: Na(+)-translocating NADH-quinone reductase subunit F (407 aa).

The helical transmembrane segment at 4 to 24 (IILGVFFFTAIVVALVFVILG) threads the bilayer. The 2Fe-2S ferredoxin-type domain occupies 33-125 (GNVEVLINGE…NMKIHVHEEV (93 aa)). [2Fe-2S] cluster contacts are provided by cysteine 68, cysteine 74, cysteine 77, and cysteine 109. The region spanning 128–269 (VKKWECTVRS…SGPFGEFFAR (142 aa)) is the FAD-binding FR-type domain.

The protein belongs to the NqrF family. In terms of assembly, composed of six subunits; NqrA, NqrB, NqrC, NqrD, NqrE and NqrF. Requires [2Fe-2S] cluster as cofactor. FAD is required as a cofactor.

The protein localises to the cell inner membrane. It catalyses the reaction a ubiquinone + n Na(+)(in) + NADH + H(+) = a ubiquinol + n Na(+)(out) + NAD(+). Functionally, NQR complex catalyzes the reduction of ubiquinone-1 to ubiquinol by two successive reactions, coupled with the transport of Na(+) ions from the cytoplasm to the periplasm. The first step is catalyzed by NqrF, which accepts electrons from NADH and reduces ubiquinone-1 to ubisemiquinone by a one-electron transfer pathway. This is Na(+)-translocating NADH-quinone reductase subunit F from Methylococcus capsulatus (strain ATCC 33009 / NCIMB 11132 / Bath).